We begin with the raw amino-acid sequence, 633 residues long: Extracellular metalloproteinase 3 (633 aa).

A signal peptide spans 1–18 (MHGLLLAGLLALPMNVLA). The propeptide occupies 19–246 (HPAEQQTSSV…VHNVVDYVAS (228 aa)). An N-linked (GlcNAc...) asparagine glycan is attached at asparagine 410. A Zn(2+)-binding site is contributed by histidine 429. Glutamate 430 is a catalytic residue. Histidine 433 provides a ligand contact to Zn(2+). Residue asparagine 480 is glycosylated (N-linked (GlcNAc...) asparagine).

Belongs to the peptidase M36 family. It depends on Zn(2+) as a cofactor.

It localises to the secreted. Its function is as follows. Secreted metalloproteinase probably acting as a virulence factor. The chain is Extracellular metalloproteinase 3 (MEP3) from Arthroderma otae (Microsporum canis).